We begin with the raw amino-acid sequence, 637 residues long: MNPSPLLDLIDSPQDLRRLDKKQLPRLAGELRAFLLESVGQTGGHFASNLGAVELTIALHYVYDTPEDKLVWDVGHQSYPHKILTGRKNQMHTMRQYGGLAGFPKRCESEYDAFGVGHSSTSIGAALGMAATDKLLGGDRRSVAIIGDGAMTAGQAFEALNCAGDMDVDLLVVLNDNEMSISPNVGALPKYLASNVVRDMHGLLSTVKAQTGKVLDKIPGAMEFAQKVEHKIKTLAEEAEHAKQSLSLFENFGFRYTGPVDGHNVENLVDVLKDLRSRKGPQLLHVITKKGNGYKLAENDPVKYHAVANLPKEGGAQMPSEKEPKPAAKPTYTQVFGKWLCDRAAADSRLVAITPAMREGSGLVEFEQRFPDRYFDVGIAEQHAVTFAGGLACEGMKPVVAIYSTFLQRAYDQLVHDIALQNLPVLFAVDRAGIVGADGPTHAGLYDLSFLRCVPNMIVAAPSDENECRLLLSTCYQADAPAAVRYPRGTGTGAPVSDGMETVEIGKGIIRREGEKTAFIAFGSMVAPALAVAEKLNATVADMRFVKPIDEELIVRLARSHDRIVTLEENAEQGGAGGAVLEVLAKHGICKPVLLLGVADTVTEHGDPKKLLDDLGLSAEAVERRVREWLPDRDAAN.

Thiamine diphosphate contacts are provided by residues H76 and 117–119 (GHS). Residue D148 participates in Mg(2+) binding. Thiamine diphosphate-binding positions include 149 to 150 (GA), N177, Y294, and E381. N177 lines the Mg(2+) pocket.

Belongs to the transketolase family. DXPS subfamily. As to quaternary structure, homodimer. Mg(2+) is required as a cofactor. Thiamine diphosphate serves as cofactor.

The enzyme catalyses D-glyceraldehyde 3-phosphate + pyruvate + H(+) = 1-deoxy-D-xylulose 5-phosphate + CO2. The protein operates within metabolic intermediate biosynthesis; 1-deoxy-D-xylulose 5-phosphate biosynthesis; 1-deoxy-D-xylulose 5-phosphate from D-glyceraldehyde 3-phosphate and pyruvate: step 1/1. In terms of biological role, catalyzes the acyloin condensation reaction between C atoms 2 and 3 of pyruvate and glyceraldehyde 3-phosphate to yield 1-deoxy-D-xylulose-5-phosphate (DXP). The sequence is that of 1-deoxy-D-xylulose-5-phosphate synthase from Neisseria gonorrhoeae (strain NCCP11945).